The following is a 468-amino-acid chain: ATP synthase subunit beta (468 aa).

155 to 162 provides a ligand contact to ATP; that stretch reads GGAGVGKT.

The protein belongs to the ATPase alpha/beta chains family. As to quaternary structure, F-type ATPases have 2 components, CF(1) - the catalytic core - and CF(0) - the membrane proton channel. CF(1) has five subunits: alpha(3), beta(3), gamma(1), delta(1), epsilon(1). CF(0) has three main subunits: a(1), b(2) and c(9-12). The alpha and beta chains form an alternating ring which encloses part of the gamma chain. CF(1) is attached to CF(0) by a central stalk formed by the gamma and epsilon chains, while a peripheral stalk is formed by the delta and b chains.

It localises to the cell membrane. The catalysed reaction is ATP + H2O + 4 H(+)(in) = ADP + phosphate + 5 H(+)(out). Its function is as follows. Produces ATP from ADP in the presence of a proton gradient across the membrane. The catalytic sites are hosted primarily by the beta subunits. This Streptococcus pyogenes serotype M5 (strain Manfredo) protein is ATP synthase subunit beta.